Here is a 277-residue protein sequence, read N- to C-terminus: NH(3)-dependent NAD(+) synthetase (277 aa).

36 to 43 (GLSGGIDS) is an ATP binding site. D42 is a binding site for Mg(2+). R118 contacts deamido-NAD(+). T138 serves as a coordination point for ATP. E143 contributes to the Mg(2+) binding site. ATP contacts are provided by K167 and S189.

Belongs to the NAD synthetase family. Homodimer.

It carries out the reaction deamido-NAD(+) + NH4(+) + ATP = AMP + diphosphate + NAD(+) + H(+). It functions in the pathway cofactor biosynthesis; NAD(+) biosynthesis; NAD(+) from deamido-NAD(+) (ammonia route): step 1/1. In terms of biological role, catalyzes the ATP-dependent amidation of deamido-NAD to form NAD. Uses ammonia as a nitrogen source. This chain is NH(3)-dependent NAD(+) synthetase, found in Chlorobaculum tepidum (strain ATCC 49652 / DSM 12025 / NBRC 103806 / TLS) (Chlorobium tepidum).